The sequence spans 337 residues: DNA-directed RNA polymerase subunit alpha (337 aa).

Positions 1-233 (MVREKVKVST…NLFIPFLHVE (233 aa)) are alpha N-terminal domain (alpha-NTD). The interval 267-337 (LAFQYIFIDQ…IEKAFQKKID (71 aa)) is alpha C-terminal domain (alpha-CTD).

The protein belongs to the RNA polymerase alpha chain family. As to quaternary structure, in plastids the minimal PEP RNA polymerase catalytic core is composed of four subunits: alpha, beta, beta', and beta''. When a (nuclear-encoded) sigma factor is associated with the core the holoenzyme is formed, which can initiate transcription.

Its subcellular location is the plastid. The protein localises to the chloroplast. It catalyses the reaction RNA(n) + a ribonucleoside 5'-triphosphate = RNA(n+1) + diphosphate. In terms of biological role, DNA-dependent RNA polymerase catalyzes the transcription of DNA into RNA using the four ribonucleoside triphosphates as substrates. This is DNA-directed RNA polymerase subunit alpha from Arabis hirsuta (Hairy rock-cress).